Here is a 640-residue protein sequence, read N- to C-terminus: tRNA-dihydrouridine(47) synthase [NAD(P)(+)]-like (640 aa).

Positions 1–11 are enriched in polar residues; the sequence is MAESEGSNTEN. Disordered regions lie at residues 1–23 and 43–123; these read MAES…ENLD and FIDA…HSQF. The segment covering 43–57 has biased composition (basic and acidic residues); the sequence is FIDADGKDVTEKETC. The span at 58 to 72 shows a compositional bias: polar residues; it reads SELSLNDAENTTRTE. Residues 77–86 are compositionally biased toward basic and acidic residues; the sequence is PEAKRIKLDD. Basic residues predominate over residues 104–120; that stretch reads EKKRARGQNKSRPHMKH. C3H1-type zinc fingers lie at residues 123 to 153 and 161 to 191; these read FEEN…HDVA and EDIR…HLGE. Residues 301–303 and Q355 contribute to the FMN site; that span reads PLT. Catalysis depends on C386, which acts as the Proton donor. FMN is bound by residues K425, H455, 487–489, and 510–511; these read NGD and AR.

Belongs to the Dus family. Dus3 subfamily. It depends on FMN as a cofactor.

It catalyses the reaction 5,6-dihydrouridine(47) in tRNA + NAD(+) = uridine(47) in tRNA + NADH + H(+). The enzyme catalyses 5,6-dihydrouridine(47) in tRNA + NADP(+) = uridine(47) in tRNA + NADPH + H(+). It carries out the reaction a 5,6-dihydrouridine in mRNA + NAD(+) = a uridine in mRNA + NADH + H(+). The catalysed reaction is a 5,6-dihydrouridine in mRNA + NADP(+) = a uridine in mRNA + NADPH + H(+). Catalyzes the synthesis of dihydrouridine, a modified base, in various RNAs, such as tRNAs, mRNAs and some long non-coding RNAs (lncRNAs). Mainly modifies the uridine in position 47 (U47) in the D-loop of most cytoplasmic tRNAs. Also able to mediate the formation of dihydrouridine in some mRNAs, thereby regulating their translation. The polypeptide is tRNA-dihydrouridine(47) synthase [NAD(P)(+)]-like (dus3l) (Xenopus laevis (African clawed frog)).